The chain runs to 329 residues: MDIDASCSLVLYGKSSVETDTATRLKNNNVLKLPDNSKVSIFLQSEIKNLVRDDDSSFNLSLFMNSISTHRFGRFLIWSPYLSSTHDVVSHNFSEIPVGSVCVSDIQLKGRGRTKNVWESPKGCLMYSFTLEMEDGRVVPLIQYVVSLAVTEAVKDVCDKKGLSYNDVKIKWPNDLYLNGLKIGGILCTSTYRSRKFLVSVGVGLNVDNEQPTTCLNAVLKDVCPPSNLLKREEILGAFFKKFENFFDLFMEQGFKSLEELYYRTWLHSGQRVIAEEKNEDQVVQNVVTIQGLTSSGYLLAIGDDNVMYELHPDGNSFDFFKGLVRRKL.

Residues 67 to 251 (ISTHRFGRFL…KFENFFDLFM (185 aa)) enclose the BPL/LPL catalytic domain. Biotin-binding positions include 84–85 (ST), glutamine 107, 111–113 (RGR), and lysine 182.

This sequence belongs to the biotin--protein ligase family. Highly expressed in seeds. Expressed in roots, leaves, stems, flowers and siliques.

It is found in the cytoplasm. Its function is as follows. Seems to have no or limited implication in biotin-dependent carboxylase biotinylation in planta. This chain is Biotin--protein ligase 2 (HCS2), found in Arabidopsis thaliana (Mouse-ear cress).